Consider the following 233-residue polypeptide: MSVISMKQLLEAGVHFGHQTRRWNPKMAPYIFTERNGIYIIDLQKTVKKAEEAYNFIREVSEAGKDVIFVGTKKQAQEAVKEEAERSNMYFVNHRWLGGMLTNFTTIKTRINRLNKLDEMEQDGTFDVLPKKEVIKLKLEREKLQRNLGGIKELDASNIGAMFVVDPRKEKNAIAEAKILGIPVVAIVDTNCDPEEVDYVIPGNDDAIRAVKLIAGKMADAIIEGRQGEQLAE.

This sequence belongs to the universal ribosomal protein uS2 family.

The polypeptide is Small ribosomal subunit protein uS2 (Clostridium perfringens (strain ATCC 13124 / DSM 756 / JCM 1290 / NCIMB 6125 / NCTC 8237 / Type A)).